The sequence spans 395 residues: Chalcone synthase (395 aa).

Val2 is modified (N-acetylvaline). Cys169 is an active-site residue.

It belongs to the thiolase-like superfamily. Chalcone/stilbene synthases family.

The catalysed reaction is (E)-4-coumaroyl-CoA + 3 malonyl-CoA + 3 H(+) = 2',4,4',6'-tetrahydroxychalcone + 3 CO2 + 4 CoA. Its pathway is secondary metabolite biosynthesis; flavonoid biosynthesis. Functionally, the primary product of this enzyme is 4,2',4',6'-tetrahydroxychalcone (also termed naringenin-chalcone or chalcone) which can under specific conditions spontaneously isomerize into naringenin. This is Chalcone synthase (CHS) from Cardamine amara (Large bitter-cress).